A 170-amino-acid chain; its full sequence is Xanthine-guanine phosphoribosyltransferase (170 aa).

Residues 41-42 (RG) and 98-106 (DDLTDTGKT) contribute to the 5-phospho-alpha-D-ribose 1-diphosphate site. Residue D99 participates in Mg(2+) binding. D102 provides a ligand contact to guanine. Residue D102 coordinates xanthine. 102–106 (DTGKT) lines the GMP pocket.

The protein belongs to the purine/pyrimidine phosphoribosyltransferase family. XGPT subfamily. Homotetramer. Requires Mg(2+) as cofactor.

The protein resides in the cell inner membrane. It carries out the reaction GMP + diphosphate = guanine + 5-phospho-alpha-D-ribose 1-diphosphate. It catalyses the reaction XMP + diphosphate = xanthine + 5-phospho-alpha-D-ribose 1-diphosphate. The catalysed reaction is IMP + diphosphate = hypoxanthine + 5-phospho-alpha-D-ribose 1-diphosphate. Its pathway is purine metabolism; GMP biosynthesis via salvage pathway; GMP from guanine: step 1/1. It participates in purine metabolism; XMP biosynthesis via salvage pathway; XMP from xanthine: step 1/1. Its function is as follows. Purine salvage pathway enzyme that catalyzes the transfer of the ribosyl-5-phosphate group from 5-phospho-alpha-D-ribose 1-diphosphate (PRPP) to the N9 position of the 6-oxopurines guanine and xanthine to form the corresponding ribonucleotides GMP (guanosine 5'-monophosphate) and XMP (xanthosine 5'-monophosphate), with the release of PPi. To a lesser extent, also acts on hypoxanthine. The sequence is that of Xanthine-guanine phosphoribosyltransferase from Brucella abortus (strain 2308).